Reading from the N-terminus, the 130-residue chain is Small ribosomal subunit protein uS9 (130 aa).

Belongs to the universal ribosomal protein uS9 family.

This is Small ribosomal subunit protein uS9 from Pseudomonas entomophila (strain L48).